Here is a 233-residue protein sequence, read N- to C-terminus: Ion-translocating oxidoreductase complex subunit E (233 aa).

5 helical membrane-spanning segments follow: residues 22-42 (LLGL…LGLG), 69-89 (IPIY…LINA), 93-113 (GLYQ…IVVG), 128-148 (ALDG…LGSI), and 182-202 (PMLL…LLAA).

It belongs to the NqrDE/RnfAE family. In terms of assembly, the complex is composed of six subunits: RnfA, RnfB, RnfC, RnfD, RnfE and RnfG.

The protein resides in the cell inner membrane. Functionally, part of a membrane-bound complex that couples electron transfer with translocation of ions across the membrane. The sequence is that of Ion-translocating oxidoreductase complex subunit E from Erwinia tasmaniensis (strain DSM 17950 / CFBP 7177 / CIP 109463 / NCPPB 4357 / Et1/99).